The following is a 256-amino-acid chain: Post-translational flagellin modification protein A (256 aa).

Residue Ser-145 participates in substrate binding. Tyr-168 serves as the catalytic Proton acceptor.

This sequence belongs to the short-chain dehydrogenases/reductases (SDR) family.

In terms of biological role, required for biosynthesis of LAH modification in the post-translational modification of Campylobacter coli flagellin. The polypeptide is Post-translational flagellin modification protein A (ptmA) (Campylobacter coli).